Consider the following 853-residue polypeptide: MIGSPDVVAFTKEDDFGDSFSDPLSLPDEFSVPLFTHAANANPWTKTSYAKFSKDFILISEFSEQVGPQPLLTIPSDPKVCGTFDLNYFSLRIMSVDYQASFVGHPPGSNYPKLNFVEDSKVVLGDSKEGAFAYVHHLTLYDLEARGFVRPFCMAYISADERKIMQQFQELSSEFSKASECLKSGNRKAFANELEKKLKDLEYTRSVLHKETELQKMNNGCYSTQAIEKANELANVEKSIYEHKDLLRQITSYPSRRKRDVDFVQCEAEKPPVMDETLKDTNPSDSAENTVETESRKSSYTPQLIKAKSAKCFDKRLKTLEELCDTSFFLQTLEQLNAVEKSFRGDLCFIYTSQIDRALVSKQRVTSFLFEAEHDWEDGGASKNFSIPSNNPTIPILNFSGEPLSLDSYTTCIDVDHLKPGVESGEGPPESSTSDITQETSEAADTETKGSFSSDKSIEALGSVSPSSLQTNFFDGLERRSKISIPSYSDNASSSIAVPHRRSDGNLVQMDAACCIGQDGFIFEDPLPELAQECCGDTVVNQEPLSLLHGDPALQMDYILEESPNMGLTFSELNTSVLSEEVAKINIEDVFDRTSFMSISTSSDRAVSPFTYGSALTVKQKKKAGHSALRFIRQYPFAQQAISCLLSGRTLVILGVDEGTVRKLVNALFIFVPNLGKYGETVQPWLSTPFQLTDLQRWKLIGLQRAVSPAGSSILHSLNRYSRYISILDCDNKTLRCPPYKGTLISHLADHRTQIKRGSTYFLHIQGMLTQLTAKAFLYTFCHHIHLPMDINDQGSVTSRRTNFLLQLGYTVEESKIIQYLSELIKQHYIHGSAKVGNPSFSFNYTTSYLYKI.

Residues 47–219 (TSYAKFSKDF…KETELQKMNN (173 aa)) enclose the uDENN FLCN/SMCR8-type domain. 2 disordered regions span residues 272-298 (PVMDETLKDTNPSDSAENTVETESRKS) and 418-454 (LKPGVESGEGPPESSTSDITQETSEAADTETKGSFSS). Residues 280–298 (DTNPSDSAENTVETESRKS) are compositionally biased toward polar residues. The cDENN FLCN/SMCR8-type domain maps to 316–753 (RLKTLEELCD…LISHLADHRT (438 aa)). Over residues 421–432 (GVESGEGPPESS) the composition is skewed to low complexity. The segment covering 433–454 (TSDITQETSEAADTETKGSFSS) has biased composition (polar residues). The region spanning 762–826 (FLHIQGMLTQ…IIQYLSELIK (65 aa)) is the dDENN FLCN/SMCR8-type domain.

This sequence belongs to the SMCR8 family. Component of the C9orf72-SMCR8 complex. The C9orf72-SMCR8 complex associates with the ATG1/ULK1 kinase complex.

The protein resides in the cytoplasm. It localises to the nucleus. Functionally, component of the C9orf72-SMCR8 complex, a complex that has guanine nucleotide exchange factor (GEF) activity and regulates autophagy. In the complex, C9orf72 and SMCR8 probably constitute the catalytic subunits that promote the exchange of GDP to GTP, converting inactive GDP-bound RAB8A and RAB39B into their active GTP-bound form, thereby promoting autophagosome maturation. The C9orf72-SMCR8 complex also acts as a negative regulator of autophagy initiation by interacting with the ATG1/ULK1 kinase complex and inhibiting its protein kinase activity. The chain is Guanine nucleotide exchange protein smcr8a (smcr8a) from Danio rerio (Zebrafish).